Here is a 373-residue protein sequence, read N- to C-terminus: Glutamate 5-kinase (373 aa).

Lys15 provides a ligand contact to ATP. Substrate-binding residues include Ser55, Asp142, and Asn154. ATP contacts are provided by residues Thr174–Asp175 and Thr216–Lys222. Residues Ala281–Arg359 enclose the PUA domain.

The protein belongs to the glutamate 5-kinase family.

Its subcellular location is the cytoplasm. It catalyses the reaction L-glutamate + ATP = L-glutamyl 5-phosphate + ADP. The protein operates within amino-acid biosynthesis; L-proline biosynthesis; L-glutamate 5-semialdehyde from L-glutamate: step 1/2. In terms of biological role, catalyzes the transfer of a phosphate group to glutamate to form L-glutamate 5-phosphate. The sequence is that of Glutamate 5-kinase from Geobacter sp. (strain M21).